A 301-amino-acid chain; its full sequence is GTPase Era (301 aa).

In terms of domain architecture, Era-type G spans 4-173 (KAGFVALIGK…LECISKHLNP (170 aa)). Residues 12–19 (GKPNAGKS) form a G1 region. GTP is bound at residue 12-19 (GKPNAGKS). Residues 38–42 (NATRK) form a G2 region. The segment at 64 to 67 (DTPG) is G3. Residues 64–68 (DTPGL) and 122–125 (SKID) each bind GTP. The G4 stretch occupies residues 122-125 (SKID). The segment at 152 to 154 (LSA) is G5. Positions 204–280 (LSDEIPYESD…FLNLQVIAQK (77 aa)) constitute a KH type-2 domain.

It belongs to the TRAFAC class TrmE-Era-EngA-EngB-Septin-like GTPase superfamily. Era GTPase family. As to quaternary structure, monomer.

The protein resides in the cytoplasm. Its subcellular location is the cell inner membrane. Functionally, an essential GTPase that binds both GDP and GTP, with rapid nucleotide exchange. Plays a role in 16S rRNA processing and 30S ribosomal subunit biogenesis and possibly also in cell cycle regulation and energy metabolism. The polypeptide is GTPase Era (Helicobacter pylori (strain P12)).